A 1514-amino-acid polypeptide reads, in one-letter code: Neuropathy target esterase sws (1514 aa).

The Lumenal segment spans residues 1–34 (MDVLELLRASATGSYTALFSDAWCQYVSKQITNS). Residues 35–55 (MYLYCALGVLSMVFLAWFMYF) traverse the membrane as a helical segment. The Cytoplasmic portion of the chain corresponds to 56-1514 (KRLARIRLRD…KGGAYNETKN (1459 aa)). 175-302 (IFGHFEKPVF…IRVIQVIMIR (128 aa)) contacts a nucleoside 3',5'-cyclic phosphate. Residues 337–352 (STHSSQCSRQTGSQPT) show a composition bias toward polar residues. Residues 337–418 (STHSSQCSRQ…NPNPDVINTS (82 aa)) are disordered. The segment covering 356 to 374 (PAPTCSNTTTTASPTTANT) has biased composition (low complexity). S457 carries the post-translational modification Phosphoserine. A nucleoside 3',5'-cyclic phosphate-binding positions include 515–644 (ELGL…VVRR) and 633–760 (IVLD…LSHR). One can recognise a PNPLA domain in the interval 987–1153 (LVLGGGGARG…VNNLPGQLWR (167 aa)). The short motif at 991-996 (GGGARG) is the GXGXXG element. The short motif at 1018–1022 (GVSIG) is the GXSXG element. S1020 (nucleophile) is an active-site residue. The Proton acceptor role is filled by D1140. The DGA/G signature appears at 1140–1142 (DGG). The residue at position 1234 (S1234) is a Phosphoserine. The interval 1409–1514 (EKSIHSAATS…KGGAYNETKN (106 aa)) is disordered. Basic and acidic residues-rich tracts occupy residues 1425-1449 (RSREFHKLEQDRSVEITRLKDETER) and 1456-1470 (LDRKGDGQEQEKEPE). Residues 1471 to 1489 (QEQELETEEPNQENTEVEE) show a composition bias toward acidic residues.

This sequence belongs to the NTE family. In terms of assembly, interacts with Pka-C3; interaction inhibits the catalytic function of Pka-C3 and the esterase activity of sws.

The protein resides in the endoplasmic reticulum membrane. It carries out the reaction a 1-acyl-sn-glycero-3-phosphocholine + H2O = sn-glycerol 3-phosphocholine + a fatty acid + H(+). In terms of biological role, phospholipase B that deacylates intracellular phosphatidylcholine (PtdCho), generating glycerophosphocholine (GroPtdCho). This deacylation occurs at both sn-2 and sn-1 positions of PtdCho. Its specific chemical modification by certain organophosphorus (OP) compounds leads to distal axonopathy. Plays a role in the signaling mechanism between neurons and glia that regulates glia wrapping during development of the adult brain. Essential for membrane lipid homeostasis and cell survival in both neurons and glia of the adult brain. The protein is Neuropathy target esterase sws of Drosophila ananassae (Fruit fly).